Reading from the N-terminus, the 171-residue chain is S-ribosylhomocysteine lyase (171 aa).

Fe cation-binding residues include H54, H58, and C128.

It belongs to the LuxS family. As to quaternary structure, homodimer. Requires Fe cation as cofactor.

The enzyme catalyses S-(5-deoxy-D-ribos-5-yl)-L-homocysteine = (S)-4,5-dihydroxypentane-2,3-dione + L-homocysteine. Involved in the synthesis of autoinducer 2 (AI-2) which is secreted by bacteria and is used to communicate both the cell density and the metabolic potential of the environment. The regulation of gene expression in response to changes in cell density is called quorum sensing. Catalyzes the transformation of S-ribosylhomocysteine (RHC) to homocysteine (HC) and 4,5-dihydroxy-2,3-pentadione (DPD). The protein is S-ribosylhomocysteine lyase of Shigella flexneri.